We begin with the raw amino-acid sequence, 765 residues long: Zinc metalloproteinase nas-37 (765 aa).

Residues Met-1–Thr-22 form the signal peptide. The propeptide occupies Ala-23–Arg-114. In terms of domain architecture, Peptidase M12A spans Gln-115 to Ser-308. Asn-126 is a glycosylation site (N-linked (GlcNAc...) asparagine). 6 disulfides stabilise this stretch: Cys-156/Cys-307, Cys-177/Cys-196, Cys-311/Cys-331, Cys-333/Cys-342, Cys-350/Cys-374, and Cys-400/Cys-420. His-204 serves as a coordination point for Zn(2+). Residue Glu-205 is part of the active site. His-208 and His-214 together coordinate Zn(2+). The EGF-like domain maps to Asn-303 to Glu-343. One can recognise a CUB domain in the interval Cys-350 to Ile-458. Residues Lys-513 to Ala-573 are disordered. 2 stretches are compositionally biased toward low complexity: residues Leu-526–Pro-545 and Ala-562–Ala-573. The region spanning Thr-576–Ala-627 is the TSP type-1 domain. Intrachain disulfides connect Cys-588-Cys-621, Cys-592-Cys-626, and Cys-604-Cys-611.

Zn(2+) is required as a cofactor. Expressed in hypodermal cells. Not expressed in the seam cells in L1 to L3 larvae, but it is present in seam cells of L4 larvae. Also expressed in attachment points of the cuticle at the anterior end of larvae, in the arcade cells in the mouth, the anterior pharynx, the amphid socket cells, and in the rectal epithelial cells at the posterior end of the larvae (at protein level).

It is found in the secreted. Functionally, metalloprotease. Plays an essential role in molting, a process during larval stages in which a new cuticle is formed and the old cuticle is shed. Required during ecdysis, the opening of the cuticle to allow the worm to escape. The protein is Zinc metalloproteinase nas-37 (nas-37) of Caenorhabditis elegans.